We begin with the raw amino-acid sequence, 715 residues long: DNA ligase (715 aa).

NAD(+)-binding positions include 47–51 (DADYD), 96–97 (SL), and glutamate 128. The active-site N6-AMP-lysine intermediate is the lysine 130. Residues arginine 151, glutamate 188, lysine 306, and lysine 330 each contribute to the NAD(+) site. Zn(2+)-binding residues include cysteine 435, cysteine 438, cysteine 453, and cysteine 459. The BRCT domain maps to 637–715 (RRDTAVAGKT…EDEWLALIGN (79 aa)).

This sequence belongs to the NAD-dependent DNA ligase family. LigA subfamily. Mg(2+) is required as a cofactor. Requires Mn(2+) as cofactor.

The catalysed reaction is NAD(+) + (deoxyribonucleotide)n-3'-hydroxyl + 5'-phospho-(deoxyribonucleotide)m = (deoxyribonucleotide)n+m + AMP + beta-nicotinamide D-nucleotide.. In terms of biological role, DNA ligase that catalyzes the formation of phosphodiester linkages between 5'-phosphoryl and 3'-hydroxyl groups in double-stranded DNA using NAD as a coenzyme and as the energy source for the reaction. It is essential for DNA replication and repair of damaged DNA. In Rhodopseudomonas palustris (strain ATCC BAA-98 / CGA009), this protein is DNA ligase.